The chain runs to 717 residues: DNA-directed RNA polymerase subunit beta' (717 aa).

Cysteine 71, cysteine 73, cysteine 91, and cysteine 94 together coordinate Zn(2+). 3 residues coordinate Mg(2+): aspartate 481, aspartate 483, and aspartate 485.

Belongs to the RNA polymerase beta' chain family. RpoC1 subfamily. In terms of assembly, in plastids the minimal PEP RNA polymerase catalytic core is composed of four subunits: alpha, beta, beta', and beta''. When a (nuclear-encoded) sigma factor is associated with the core the holoenzyme is formed, which can initiate transcription. The cofactor is Mg(2+). Requires Zn(2+) as cofactor.

The protein localises to the plastid. The protein resides in the chloroplast. It catalyses the reaction RNA(n) + a ribonucleoside 5'-triphosphate = RNA(n+1) + diphosphate. DNA-dependent RNA polymerase catalyzes the transcription of DNA into RNA using the four ribonucleoside triphosphates as substrates. This Chlorokybus atmophyticus (Soil alga) protein is DNA-directed RNA polymerase subunit beta'.